A 460-amino-acid chain; its full sequence is MFRRPDDDDDDYSGRKVIKPKPIAEKYAKKLGSEFSTGKTFVTGSDKSQKDFYGSQQVRNDVMKSSDSGGAPLTEDEKNKLSAKILKAEMKGDTDLVKKLKRKLESGISGDDEPPKSKSKEVTMMRRDREGNILPASSRRSDSDRHGEGSSRMRREYEKSQDLDSMVREEKTGTAGDQLRLFERSLIKSSKIRRHDDESVDDIAEMQKGKKKSDEKDKKRKEKESIKEHKRIERSFDDCSRCIDSSRLKKHNIIAVGINTYLAVVEWDGLDDEHLIIVPTQHCSSTIQLDENVWDEMRLWRKGLVAVWKSQNRDCIFFEMSRHVDSNPHVFIECVPVEQEIGDMASIYFKKAINECEGEYMDNKKLIETKDLRRQIPKGFSYFAVDFGLSNGFAHVIESHDHFPSTFATEIIAGMLDLPPKKWRKRETDEMSKQKSRAENFKKLWEPVDWTKRLKNDSTK.

Disordered regions lie at residues 38-78 (GKTF…EDEK), 103-175 (KLES…TGTA), and 193-227 (RRHD…ESIK). The span at 54–68 (GSQQVRNDVMKSSDS) shows a compositional bias: polar residues. Positions 84–106 (KILKAEMKGDTDLVKKLKRKLES) form a coiled coil. 3 stretches are compositionally biased toward basic and acidic residues: residues 113-131 (EPPK…DREG), 139-172 (RRSD…EEKT), and 205-227 (EMQK…ESIK). The stretch at 210-231 (KKKSDEKDKKRKEKESIKEHKR) forms a coiled coil.

Belongs to the CWF19 family.

In Caenorhabditis elegans, this protein is CWF19-like protein 2 homolog.